The following is a 90-amino-acid chain: Antitoxin epsilon 2 (90 aa).

The protein belongs to the epsilon antitoxin family. In the presence of the zeta toxin, forms an inactive PezA(2)PezT(2) heterotetramer.

In terms of biological role, antitoxin component of a type II toxin-antitoxin (TA) system. Neutralizes the toxic effect of zeta toxin. Part of a postsegregational killing (PSK) system involved in the killing of plasmid-free cells. Continuous synthesis of the epsilon antitoxin is required to counteract the zeta toxin. In Enterococcus faecalis (Streptococcus faecalis), this protein is Antitoxin epsilon 2.